A 205-amino-acid chain; its full sequence is Guanylate kinase (205 aa).

The 180-residue stretch at 5-184 (GLLIVLSGPS…AVQKIKGIVE (180 aa)) folds into the Guanylate kinase-like domain. 12–19 (GPSGVGKG) lines the ATP pocket.

Belongs to the guanylate kinase family.

It is found in the cytoplasm. The catalysed reaction is GMP + ATP = GDP + ADP. Its function is as follows. Essential for recycling GMP and indirectly, cGMP. The polypeptide is Guanylate kinase (Listeria innocua serovar 6a (strain ATCC BAA-680 / CLIP 11262)).